Consider the following 148-residue polypeptide: Transthyretin-like protein 2 (148 aa).

The first 17 residues, Met1–Ser17, serve as a signal peptide directing secretion. N-linked (GlcNAc...) asparagine glycosylation occurs at Asn77.

It belongs to the nematode transthyretin-like family.

It localises to the secreted. This chain is Transthyretin-like protein 2 (ttr-2), found in Caenorhabditis elegans.